The primary structure comprises 167 residues: NADH-quinone oxidoreductase subunit B (167 aa).

4 residues coordinate [4Fe-4S] cluster: cysteine 40, cysteine 41, cysteine 105, and cysteine 134.

Belongs to the complex I 20 kDa subunit family. As to quaternary structure, NDH-1 is composed of 14 different subunits. Subunits NuoB, C, D, E, F, and G constitute the peripheral sector of the complex. [4Fe-4S] cluster serves as cofactor.

It localises to the cell inner membrane. It carries out the reaction a quinone + NADH + 5 H(+)(in) = a quinol + NAD(+) + 4 H(+)(out). In terms of biological role, NDH-1 shuttles electrons from NADH, via FMN and iron-sulfur (Fe-S) centers, to quinones in the respiratory chain. The immediate electron acceptor for the enzyme in this species is believed to be ubiquinone. Couples the redox reaction to proton translocation (for every two electrons transferred, four hydrogen ions are translocated across the cytoplasmic membrane), and thus conserves the redox energy in a proton gradient. The sequence is that of NADH-quinone oxidoreductase subunit B from Campylobacter jejuni (strain RM1221).